Reading from the N-terminus, the 164-residue chain is C-phycoerythrin class 1 subunit alpha (164 aa).

(2R,3E)-phycoerythrobilin is bound by residues Cys-82 and Cys-139.

This sequence belongs to the phycobiliprotein family. As to quaternary structure, heterodimer of an alpha and a beta chain. Post-translationally, contains two covalently linked phycoerythrobilin chromophores.

The protein resides in the cellular thylakoid membrane. Functionally, light-harvesting photosynthetic bile pigment-protein from the phycobiliprotein complex. The sequence is that of C-phycoerythrin class 1 subunit alpha (cpeA) from Synechococcus sp. (strain WH8020).